Consider the following 531-residue polypeptide: Putative F-box protein At2g02890 (531 aa).

The region spanning 141 to 188 is the F-box domain; sequence RHSSSLTNDLIEEILSRLHSKSVARFRCVSKQCASMFASPYFKKLFQT.

The protein is Putative F-box protein At2g02890 of Arabidopsis thaliana (Mouse-ear cress).